The following is a 336-amino-acid chain: Aspartate carbamoyltransferase catalytic subunit (336 aa).

Residues Arg-72 and Thr-73 each coordinate carbamoyl phosphate. Lys-100 lines the L-aspartate pocket. Positions 122, 152, and 155 each coordinate carbamoyl phosphate. The L-aspartate site is built by Arg-185 and Arg-240. Residues Gly-281 and Pro-282 each contribute to the carbamoyl phosphate site.

It belongs to the aspartate/ornithine carbamoyltransferase superfamily. ATCase family. In terms of assembly, heterododecamer (2C3:3R2) of six catalytic PyrB chains organized as two trimers (C3), and six regulatory PyrI chains organized as three dimers (R2).

It catalyses the reaction carbamoyl phosphate + L-aspartate = N-carbamoyl-L-aspartate + phosphate + H(+). It functions in the pathway pyrimidine metabolism; UMP biosynthesis via de novo pathway; (S)-dihydroorotate from bicarbonate: step 2/3. Functionally, catalyzes the condensation of carbamoyl phosphate and aspartate to form carbamoyl aspartate and inorganic phosphate, the committed step in the de novo pyrimidine nucleotide biosynthesis pathway. This chain is Aspartate carbamoyltransferase catalytic subunit, found in Marinobacter nauticus (strain ATCC 700491 / DSM 11845 / VT8) (Marinobacter aquaeolei).